A 383-amino-acid polypeptide reads, in one-letter code: tRNA-specific 2-thiouridylase MnmA (383 aa).

Residues 9-16 (GMSGGVDS) and methionine 35 each bind ATP. The tract at residues 95–97 (NPD) is interaction with target base in tRNA. Residue cysteine 100 is the Nucleophile of the active site. A disulfide bridge connects residues cysteine 100 and cysteine 196. An ATP-binding site is contributed by glycine 124. The segment at 146–148 (KDQ) is interaction with tRNA. Cysteine 196 serves as the catalytic Cysteine persulfide intermediate. Residues 308-309 (RY) form an interaction with tRNA region.

It belongs to the MnmA/TRMU family.

The protein resides in the cytoplasm. It catalyses the reaction S-sulfanyl-L-cysteinyl-[protein] + uridine(34) in tRNA + AH2 + ATP = 2-thiouridine(34) in tRNA + L-cysteinyl-[protein] + A + AMP + diphosphate + H(+). Functionally, catalyzes the 2-thiolation of uridine at the wobble position (U34) of tRNA, leading to the formation of s(2)U34. The sequence is that of tRNA-specific 2-thiouridylase MnmA from Burkholderia mallei (strain NCTC 10247).